Reading from the N-terminus, the 134-residue chain is Small ribosomal subunit protein bS6 (134 aa).

A disordered region spans residues 103-134 (AAPVKSAEEGTEEVAAEAATEAPAETTTTVEV). Residues 118 to 134 (AEAATEAPAETTTTVEV) show a composition bias toward low complexity.

This sequence belongs to the bacterial ribosomal protein bS6 family.

In terms of biological role, binds together with bS18 to 16S ribosomal RNA. The polypeptide is Small ribosomal subunit protein bS6 (Geobacter sp. (strain M21)).